The primary structure comprises 114 residues: Small ribosomal subunit protein uS15 (114 aa).

The protein belongs to the universal ribosomal protein uS15 family.

The polypeptide is Small ribosomal subunit protein uS15 (RpS13) (Musca domestica (House fly)).